A 261-amino-acid polypeptide reads, in one-letter code: Taurine import ATP-binding protein TauB (261 aa).

The region spanning Leu4–Ala233 is the ABC transporter domain. Gly38 to Thr45 lines the ATP pocket.

Belongs to the ABC transporter superfamily. Taurine importer (TC 3.A.1.17.1) family. As to quaternary structure, the complex is composed of two ATP-binding proteins (TauB), two transmembrane proteins (TauC) and a solute-binding protein (TauA).

It localises to the cell inner membrane. It catalyses the reaction taurine(out) + ATP + H2O = taurine(in) + ADP + phosphate + H(+). Its function is as follows. Part of the ABC transporter complex TauABC involved in taurine import. Responsible for energy coupling to the transport system. The chain is Taurine import ATP-binding protein TauB from Pseudomonas savastanoi pv. phaseolicola (strain 1448A / Race 6) (Pseudomonas syringae pv. phaseolicola (strain 1448A / Race 6)).